A 388-amino-acid polypeptide reads, in one-letter code: MGFPRILSKNNKIYTKLGEFCLSGDSFWIVCHTCQEELQTQDQFWKHIQDEHNFMHGVAKEHSRTSSYCLTDVEAAAAAATPGSSSQQGATAISVPLALYTCSTKYSEEEQREVEMHEQQVQHQVQQQQAQQQQAQQQQHQQSQQQGHQQHQVQQQQTHQQLQQQRDVAKELAELHANAVAAAAASAAVVSTGEGTTQSNSAIDIKIEPSSLTLTPEMQAAAAAGGTIYHLPQLVPPPVPPPPPGSGFVSVSASTSTSNTVSTTPPNVLQQQQQLNMSVVPSTAMAAAMLAASQEQLPKDSNSTTASAGSAVSSDDGERWYVCDYETCGLKFKYKSRMELHRVVHSKERRFNCELCSASFKQSCNLSTHRKKKHALRGIKSEILPQRF.

The C2H2-type 1 zinc-finger motif lies at 29–52 (IVCHTCQEELQTQDQFWKHIQDEH). Low complexity-rich tracts occupy residues 138–165 (QQHQQSQQQGHQQHQVQQQQTHQQLQQQ) and 249–265 (VSVSASTSTSNTVSTTP). Disordered regions lie at residues 138-168 (QQHQQSQQQGHQQHQVQQQQTHQQLQQQRDV) and 240-265 (PPPPPGSGFVSVSASTSTSNTVSTTP). 2 consecutive C2H2-type zinc fingers follow at residues 321–345 (YVCDYETCGLKFKYKSRMELHRVVH) and 351–374 (FNCELCSASFKQSCNLSTHRKKKH).

The protein localises to the nucleus. May be a transcription factor for genes having (A+T) stretches in their promoter and/or enhancer regions. Binds to AT rich DNA. The chain is AT-rich binding protein from Drosophila melanogaster (Fruit fly).